We begin with the raw amino-acid sequence, 536 residues long: G-protein coupled receptor Mth2 (536 aa).

The Extracellular segment spans residues M1–N210. Disulfide bonds link C17–C71, C73–C78, C82–C177, C83–C96, and C138–C197. N24 and N33 each carry an N-linked (GlcNAc...) asparagine glycan. 6 N-linked (GlcNAc...) asparagine glycosylation sites follow: N103, N113, N118, N159, N184, and N203. The helical transmembrane segment at A211–I231 threads the bilayer. The Cytoplasmic segment spans residues P232–S241. Residues L242–Y262 form a helical membrane-spanning segment. The Extracellular portion of the chain corresponds to Q263–V273. Residues F274–F294 form a helical membrane-spanning segment. Topologically, residues D295–R314 are cytoplasmic. The helical transmembrane segment at F315 to I335 threads the bilayer. Topologically, residues A336–A365 are extracellular. Residues M366–M386 traverse the membrane as a helical segment. The Cytoplasmic portion of the chain corresponds to T387–K417. A helical membrane pass occupies residues F418–S438. Topologically, residues Y439–K449 are extracellular. The helical transmembrane segment at L450 to V470 threads the bilayer. Residues M471 to R536 are Cytoplasmic-facing. Residues R487–V506 are disordered. Over residues Q492–S505 the composition is skewed to low complexity.

It belongs to the G-protein coupled receptor 2 family. Mth subfamily. As to quaternary structure, homodimer.

It localises to the cell membrane. Functionally, involved in biological aging and stress response. Essential for adult survival. The sequence is that of G-protein coupled receptor Mth2 (mth2) from Drosophila yakuba (Fruit fly).